A 95-amino-acid chain; its full sequence is Co-chaperonin GroES (95 aa).

The protein belongs to the GroES chaperonin family. In terms of assembly, heptamer of 7 subunits arranged in a ring. Interacts with the chaperonin GroEL.

It localises to the cytoplasm. Functionally, together with the chaperonin GroEL, plays an essential role in assisting protein folding. The GroEL-GroES system forms a nano-cage that allows encapsulation of the non-native substrate proteins and provides a physical environment optimized to promote and accelerate protein folding. GroES binds to the apical surface of the GroEL ring, thereby capping the opening of the GroEL channel. The chain is Co-chaperonin GroES from Nitratidesulfovibrio vulgaris (strain ATCC 29579 / DSM 644 / CCUG 34227 / NCIMB 8303 / VKM B-1760 / Hildenborough) (Desulfovibrio vulgaris).